Consider the following 569-residue polypeptide: Sulfite reductase [NADPH] hemoprotein beta-component (569 aa).

The [4Fe-4S] cluster site is built by Cys-434, Cys-440, Cys-479, and Cys-483. Residue Cys-483 coordinates siroheme.

It belongs to the nitrite and sulfite reductase 4Fe-4S domain family. As to quaternary structure, alpha(8)-beta(8). The alpha component is a flavoprotein, the beta component is a hemoprotein. Siroheme serves as cofactor. Requires [4Fe-4S] cluster as cofactor.

It catalyses the reaction hydrogen sulfide + 3 NADP(+) + 3 H2O = sulfite + 3 NADPH + 4 H(+). It functions in the pathway sulfur metabolism; hydrogen sulfide biosynthesis; hydrogen sulfide from sulfite (NADPH route): step 1/1. In terms of biological role, component of the sulfite reductase complex that catalyzes the 6-electron reduction of sulfite to sulfide. This is one of several activities required for the biosynthesis of L-cysteine from sulfate. The protein is Sulfite reductase [NADPH] hemoprotein beta-component of Staphylococcus carnosus (strain TM300).